A 139-amino-acid chain; its full sequence is MAMTYHLDVVSAEKHMFSGLVQKIQVTGSEGELGIFPGHAPLLTAIKPGMVRIVKQHGEEEFIYLSGGILEVQPSVVTVLADTAIRGTDLDEARALEAKRKAEEHISSSHGDVDYAQASAELAKAIAKLRVIELTRRSM.

Belongs to the ATPase epsilon chain family. As to quaternary structure, F-type ATPases have 2 components, CF(1) - the catalytic core - and CF(0) - the membrane proton channel. CF(1) has five subunits: alpha(3), beta(3), gamma(1), delta(1), epsilon(1). CF(0) has three main subunits: a, b and c.

It is found in the cell inner membrane. In terms of biological role, produces ATP from ADP in the presence of a proton gradient across the membrane. The chain is ATP synthase epsilon chain from Serratia proteamaculans (strain 568).